Here is a 788-residue protein sequence, read N- to C-terminus: ATP-dependent 6-phosphofructokinase, platelet type (788 aa).

N-acetylmethionine is present on methionine 1. The segment at methionine 1–isoleucine 399 is N-terminal catalytic PFK domain 1. Phosphoserine is present on residues serine 2, serine 6, serine 12, and serine 21. Residues glycine 34, arginine 97–cysteine 98, and glycine 127–serine 130 contribute to the ATP site. Aspartate 128 lines the Mg(2+) pocket. Serine 142 is modified (phosphoserine). Residues serine 173–aspartate 175, arginine 210, methionine 217–arginine 219, glutamate 273, arginine 301, and histidine 307–arginine 310 each bind substrate. Aspartate 175 (proton acceptor) is an active-site residue. A Phosphoserine modification is found at serine 386. Lysine 395 is modified (N6-acetyllysine). The interval lysine 400–cysteine 411 is interdomain linker. The segment at asparagine 412–isoleucine 788 is C-terminal regulatory PFK domain 2. Arginine 481 is a beta-D-fructose 2,6-bisphosphate binding site. N6-acetyllysine is present on lysine 486. Beta-D-fructose 2,6-bisphosphate is bound by residues threonine 538–asparagine 542, arginine 576, methionine 583–glycine 585, and glutamate 639. The O-linked (GlcNAc) serine glycan is linked to serine 540. At tyrosine 651 the chain carries Phosphotyrosine. Residues arginine 665 and histidine 671 to glutamine 674 contribute to the beta-D-fructose 2,6-bisphosphate site. Residue lysine 688 is modified to N6-acetyllysine. Arginine 744 provides a ligand contact to beta-D-fructose 2,6-bisphosphate.

Belongs to the phosphofructokinase type A (PFKA) family. ATP-dependent PFK group I subfamily. Eukaryotic two domain clade 'E' sub-subfamily. Homo- and heterotetramers. Phosphofructokinase (PFK) enzyme functions as a tetramer composed of different combinations of 3 types of subunits, called PFKM (M), PFKL (L) and PFKP (P). The composition of the PFK tetramer differs according to the tissue type it is present in. The kinetic and regulatory properties of the tetrameric enzyme are dependent on the subunit composition, hence can vary across tissues. Interacts with ATG4B; promoting phosphorylation of ATG4B. Mg(2+) serves as cofactor. GlcNAcylation decreases enzyme activity. Post-translationally, phosphorylation at Ser-386 promotes interaction with ATG4B. Expressed at high level in neuroendocrine tissues.

Its subcellular location is the cytoplasm. It catalyses the reaction beta-D-fructose 6-phosphate + ATP = beta-D-fructose 1,6-bisphosphate + ADP + H(+). It functions in the pathway carbohydrate degradation; glycolysis; D-glyceraldehyde 3-phosphate and glycerone phosphate from D-glucose: step 3/4. Allosterically activated by ADP, AMP, or fructose 2,6-bisphosphate, and allosterically inhibited by ATP or citrate. Catalyzes the phosphorylation of D-fructose 6-phosphate to fructose 1,6-bisphosphate by ATP, the first committing step of glycolysis. The polypeptide is ATP-dependent 6-phosphofructokinase, platelet type (Pfkp) (Rattus norvegicus (Rat)).